Reading from the N-terminus, the 189-residue chain is Elongation factor P (189 aa).

The protein belongs to the elongation factor P family.

Its subcellular location is the cytoplasm. It functions in the pathway protein biosynthesis; polypeptide chain elongation. Functionally, involved in peptide bond synthesis. Stimulates efficient translation and peptide-bond synthesis on native or reconstituted 70S ribosomes in vitro. Probably functions indirectly by altering the affinity of the ribosome for aminoacyl-tRNA, thus increasing their reactivity as acceptors for peptidyl transferase. This chain is Elongation factor P, found in Rhizobium rhizogenes (strain K84 / ATCC BAA-868) (Agrobacterium radiobacter).